Consider the following 400-residue polypeptide: tRNA-specific 2-thiouridylase MnmA (400 aa).

Residues 19–26 (AMSGGVDS) and Leu-45 each bind ATP. Cys-113 functions as the Nucleophile in the catalytic mechanism. A disulfide bridge connects residues Cys-113 and Cys-210. Gly-137 is a binding site for ATP. Residues 160–162 (RDQ) form an interaction with tRNA region. The active-site Cysteine persulfide intermediate is the Cys-210.

Belongs to the MnmA/TRMU family.

The protein resides in the cytoplasm. It catalyses the reaction S-sulfanyl-L-cysteinyl-[protein] + uridine(34) in tRNA + AH2 + ATP = 2-thiouridine(34) in tRNA + L-cysteinyl-[protein] + A + AMP + diphosphate + H(+). Catalyzes the 2-thiolation of uridine at the wobble position (U34) of tRNA, leading to the formation of s(2)U34. The polypeptide is tRNA-specific 2-thiouridylase MnmA (Rhodopseudomonas palustris (strain BisB18)).